The chain runs to 509 residues: Steroid 17-alpha-hydroxylase/17,20 lyase (509 aa).

Heme is bound at residue C445.

The protein belongs to the cytochrome P450 family. The cofactor is heme.

Its subcellular location is the membrane. The enzyme catalyses a C21-steroid + reduced [NADPH--hemoprotein reductase] + O2 = a 17alpha-hydroxy-C21-steroid + oxidized [NADPH--hemoprotein reductase] + H2O + H(+). It catalyses the reaction 17alpha-hydroxyprogesterone + reduced [NADPH--hemoprotein reductase] + O2 = androst-4-ene-3,17-dione + acetate + oxidized [NADPH--hemoprotein reductase] + H2O + 2 H(+). The catalysed reaction is 17alpha-hydroxypregnenolone + reduced [NADPH--hemoprotein reductase] + O2 = 3beta-hydroxyandrost-5-en-17-one + acetate + oxidized [NADPH--hemoprotein reductase] + H2O + 2 H(+). The protein operates within lipid metabolism; steroid biosynthesis. Conversion of pregnenolone and progesterone to their 17-alpha-hydroxylated products and subsequently to dehydroepiandrosterone (DHEA) and androstenedione. Catalyzes both the 17-alpha-hydroxylation and the 17,20-lyase reaction. The sequence is that of Steroid 17-alpha-hydroxylase/17,20 lyase (CYP17A1) from Squalus acanthias (Spiny dogfish).